The chain runs to 448 residues: Trigger factor (448 aa).

A PPIase FKBP-type domain is found at 172-257; that stretch reads GDRVTVDFVG…MKKIEWPHLP (86 aa).

It belongs to the FKBP-type PPIase family. Tig subfamily.

It is found in the cytoplasm. The catalysed reaction is [protein]-peptidylproline (omega=180) = [protein]-peptidylproline (omega=0). In terms of biological role, involved in protein export. Acts as a chaperone by maintaining the newly synthesized protein in an open conformation. Functions as a peptidyl-prolyl cis-trans isomerase. The sequence is that of Trigger factor from Paraburkholderia xenovorans (strain LB400).